Consider the following 1167-residue polypeptide: RNA-directed RNA polymerase (1167 aa).

The RdRp catalytic domain occupies 553-735 (LTYGILAEAT…KALASYTGLE (183 aa)).

The protein belongs to the reoviridae RNA-directed RNA polymerase family. Interacts with VP3 (Potential). Interacts with VP2 (Potential). Interacts with NSP5; this interaction is probably necessary for the formation of functional virus factories.

It is found in the virion. The catalysed reaction is RNA(n) + a ribonucleoside 5'-triphosphate = RNA(n+1) + diphosphate. Its function is as follows. RNA-directed RNA polymerase that is involved in both transcription and genome replication. Together with VP3 capping enzyme, forms an enzyme complex positioned near the channels situated at each of the five-fold vertices of the core. Following infection, the outermost layer of the virus is lost, leaving a double-layered particle (DLP) made up of the core and VP6 shell. VP1 then catalyzes the transcription of fully conservative plus-strand genomic RNAs that are extruded through the DLP's channels into the cytoplasm where they function as mRNAs for translation of viral proteins. One copy of each of the viral (+)RNAs is also recruited during core assembly, together with newly synthesized polymerase complexes and VP2. The polymerase of these novo-formed particles catalyzes the synthesis of complementary minus-strands leading to dsDNA formation. To do so, the polymerase specifically recognizes conserved 3' sequence(s) in plus-strand RNA templates. Once dsRNA synthesis is complete, the polymerase switches to the transcriptional mode, thus providing secondary transcription. The chain is RNA-directed RNA polymerase from Rotavirus X (strain RVX/Human/China/NADRV-J19/1997/GXP[X]) (RV ADRV-N).